A 1165-amino-acid polypeptide reads, in one-letter code: Immunoglobulin superfamily member 3 (1165 aa).

An N-terminal signal peptide occupies residues 1–20; sequence MGTAAGLLLAALLLAGTSWA. The Extracellular segment spans residues 21–1095; sequence QREVNIQQGP…LQSTICANDA (1075 aa). 8 consecutive Ig-like C2-type domains span residues 22 to 139, 144 to 262, 276 to 386, 406 to 527, 545 to 661, 678 to 800, 810 to 934, and 951 to 1067; these read REVN…AKMN, PDTL…WFPL, PTDK…RGPS, PLRT…WQLL, FAVT…WTQL, PRLQ…EEAS, PDAN…WYKR, and PALQ…WYLL. Disulfide bonds link cysteine 43–cysteine 121 and cysteine 168–cysteine 246. The EWI motif motif lies at 250–252; sequence EWI. 6 disulfide bridges follow: cysteine 302–cysteine 376, cysteine 432–cysteine 511, cysteine 566–cysteine 645, cysteine 701–cysteine 779, cysteine 835–cysteine 918, and cysteine 974–cysteine 1051. Residues 1096–1116 form a helical membrane-spanning segment; that stretch reads LFYLVFFYPFPIFGILIITIL. Topologically, residues 1117-1165 are cytoplasmic; the sequence is LVRFRHRPTSKPGEGKNGVPLLWIKEPHLNYSPTCLEPPVLSIHPGTID.

The protein localises to the membrane. This chain is Immunoglobulin superfamily member 3 (igsf3), found in Xenopus laevis (African clawed frog).